Here is a 196-residue protein sequence, read N- to C-terminus: Alpha-crystallin A chain (196 aa).

At methionine 1 the chain carries N-acetylmethionine. Positions 1–63 (MDVTIQHPWF…RTVLDSGISE (63 aa)) are required for complex formation with BFSP1 and BFSP2. Glutamine 6 carries the post-translational modification Deamidated glutamine; partial. Serine 45 carries the phosphoserine modification. Glutamine 50 bears the Deamidated glutamine; partial mark. Residues 76-185 (HAGNPKNNPV…GHSERAIPVS (110 aa)) enclose the sHSP domain. N6-acetyllysine occurs at positions 93 and 122. Histidine 123 provides a ligand contact to Zn(2+). Asparagine 124 is subject to Deamidated asparagine; partial. Zn(2+) contacts are provided by glutamate 125 and histidine 130. Residue serine 145 is modified to Phosphoserine. Asparagine 146 carries the deamidated asparagine; partial modification. The disordered stretch occupies residues 168 to 196 (KVQSGLDAGHSERAIPVSREEKPSSAPSS). The residue at position 170 (glutamine 170) is a Deamidated glutamine; partial. Basic and acidic residues predominate over residues 176–190 (GHSERAIPVSREEKP). Histidine 177 contacts Zn(2+). A glycan (O-linked (GlcNAc) serine) is linked at serine 185.

Belongs to the small heat shock protein (HSP20) family. Heteropolymer composed of three CRYAA and one CRYAB subunits. Inter-subunit bridging via zinc ions enhances stability, which is crucial as there is no protein turn over in the lens. Can also form homodimers and homotetramers (dimers of dimers) which serve as the building blocks of homooligomers. Within homooligomers, the zinc-binding motif is created from residues of 3 different molecules. His-123 and Glu-125 from one molecule are ligands of the zinc ion, and His-130 and His-177 residues from additional molecules complete the site with tetrahedral coordination geometry. Part of a complex required for lens intermediate filament formation composed of BFSP1, BFSP2 and CRYAA. Post-translationally, acetylation at Lys-93 may increase chaperone activity. Undergoes age-dependent proteolytical cleavage at the C-terminus.

Its subcellular location is the cytoplasm. The protein localises to the nucleus. Functionally, contributes to the transparency and refractive index of the lens. Acts as a chaperone, preventing aggregation of various proteins under a wide range of stress conditions. Required for the correct formation of lens intermediate filaments as part of a complex composed of BFSP1, BFSP2 and CRYAA. The chain is Alpha-crystallin A chain (Cryaa) from Mus musculus (Mouse).